The primary structure comprises 230 residues: Transcription factor bHLH147 (230 aa).

The span at 1–17 (MESISPVSNQLLQPTTT) shows a compositional bias: polar residues. A disordered region spans residues 1-52 (MESISPVSNQLLQPTTTSSNSDRSRRKRKKKSSPSSVEKSPSPSISLEKWRS). A compositionally biased stretch (low complexity) spans 33–46 (SPSSVEKSPSPSIS). The 50-residue stretch at 147–196 (KQRATVLRLKAKGLPAVQRKVKVLSRLVPGCRKQSLPVVLEETTDYIAAM) folds into the bHLH domain. Positions 210–230 (VSSSPPPPTPGHEGGQTHMLG) are disordered.

In terms of assembly, homodimer. Interacts with PRE3.

Its subcellular location is the nucleus. In terms of biological role, atypical bHLH transcription factor probably unable to bind DNA. Negatively regulates brassinosteroid signaling. The polypeptide is Transcription factor bHLH147 (BHLH147) (Arabidopsis thaliana (Mouse-ear cress)).